The primary structure comprises 179 residues: O-acetyl-ADP-ribose deacetylase (179 aa).

Residues 1–175 (MTSRLQVIQG…LYARLLTQQG (175 aa)) form the Macro domain. Residues 11-12 (DI), N25, 33-35 (GVD), and 122-126 (STGVY) each bind substrate. D35 acts as the Proton acceptor in catalysis.

It belongs to the MacroD-type family. YmdB subfamily. As to quaternary structure, homodimer. Interacts with RNase III.

The catalysed reaction is 3''-O-acetyl-ADP-D-ribose + H2O = ADP-D-ribose + acetate + H(+). It catalyses the reaction 2''-O-acetyl-ADP-D-ribose + H2O = ADP-D-ribose + acetate + H(+). In terms of biological role, deacetylates O-acetyl-ADP ribose to yield ADP-ribose and free acetate. Down-regulates ribonuclease 3 (RNase III) activity. Acts by interacting directly with the region of the ribonuclease that is required for dimerization/activation. The protein is O-acetyl-ADP-ribose deacetylase of Salmonella gallinarum (strain 287/91 / NCTC 13346).